The following is a 645-amino-acid chain: MTSRPITPLLDTIRGPSDTRGLSVAQLEQLAREVRAEMIDAVSVTGGHLGSGLGVVELTVALHHVFDTPDDRIIWDVGHQCYPHKILTGRRDRIRTLRQGGGLSGFTLREESPYDPFGAGHSSTSISAGLGMAIGSALAGDARDVVAVIGDGSMSAGMAYEAMNNAGAAKSRLIVILNDNDMSIAPPVGAMSAYLSRLLSSKSWLSIRTLAKEIVARLPDALERTAKRAEEYARGMVTGGGTLFEEMGFYYVGPIDGHRMDHLVPVLRNVREAGRDGPVLIHVVTQKGKGYAPAENAPDKYHGVSRFNVVTGVQEKAKPQAPSYTAVFGKQLVAAAAKDHRIVAVTAAMPGGTGLDKLAAAYPQRCFDVGIAEQHAVTFAAGLACEGLKPFVALYSSFLQRGYDQVVHDVVLQKLPVRFAIDRAGFVGADGATHGGVFDMAFLGCLPNLVVMCAADEAELARMVVTAAGHDSGPIALRYPRGEGVGVEIPEDPQPLAIGKGRIVREGKGVALLSIGTRLQSCLEACEILAARGLTPTVADARFLKPFDEELVADLAARHEVLIVVEEGAIGGFCSHVATWLANQGLLDGGLKLRALHIPDRFFEHDAPEVQCAKAGIDAQAITTAVLDALKLETSATIDAGALKA.

Thiamine diphosphate-binding positions include His79 and 120–122; that span reads GHS. Asp151 is a Mg(2+) binding site. Thiamine diphosphate-binding positions include 152-153, Asn180, Tyr291, and Glu373; that span reads GS. Asn180 contacts Mg(2+).

Belongs to the transketolase family. DXPS subfamily. In terms of assembly, homodimer. Mg(2+) is required as a cofactor. Thiamine diphosphate serves as cofactor.

It catalyses the reaction D-glyceraldehyde 3-phosphate + pyruvate + H(+) = 1-deoxy-D-xylulose 5-phosphate + CO2. It functions in the pathway metabolic intermediate biosynthesis; 1-deoxy-D-xylulose 5-phosphate biosynthesis; 1-deoxy-D-xylulose 5-phosphate from D-glyceraldehyde 3-phosphate and pyruvate: step 1/1. Its function is as follows. Catalyzes the acyloin condensation reaction between C atoms 2 and 3 of pyruvate and glyceraldehyde 3-phosphate to yield 1-deoxy-D-xylulose-5-phosphate (DXP). The protein is 1-deoxy-D-xylulose-5-phosphate synthase 2 of Rhodospirillum rubrum (strain ATCC 11170 / ATH 1.1.1 / DSM 467 / LMG 4362 / NCIMB 8255 / S1).